Consider the following 90-residue polypeptide: Large ribosomal subunit protein bL27 (90 aa).

It belongs to the bacterial ribosomal protein bL27 family.

In Rhodopseudomonas palustris (strain BisB5), this protein is Large ribosomal subunit protein bL27.